A 362-amino-acid chain; its full sequence is Large ribosomal subunit protein uL3 (362 aa).

Positions 340–362 (RPPKKKPPVQRPQITYVSVESKQ) are disordered. The span at 351 to 362 (PQITYVSVESKQ) shows a compositional bias: polar residues.

It belongs to the universal ribosomal protein uL3 family. Part of the 50S ribosomal subunit. Forms a cluster with proteins L14 and L24e.

In terms of biological role, one of the primary rRNA binding proteins, it binds directly near the 3'-end of the 23S rRNA, where it nucleates assembly of the 50S subunit. The sequence is that of Large ribosomal subunit protein uL3 from Pyrococcus horikoshii (strain ATCC 700860 / DSM 12428 / JCM 9974 / NBRC 100139 / OT-3).